The following is a 196-amino-acid chain: Early light-induced protein, chloroplastic (196 aa).

A chloroplast-targeting transit peptide spans 1 to 48 (MAVSSCQSIMSNSMTNISSRSRVNQFTNIPSVYIPTLRRNVSLKVRSM). A compositionally biased stretch (basic and acidic residues) spans 47–57 (SMAEGEPKEQS). The interval 47–81 (SMAEGEPKEQSKVAVDPTTPTASTPTPQPAYTRPP) is disordered. The next 3 helical transmembrane spans lie at 105–125 (LAMIGFVAAMGVEIAKGQGLS), 132–152 (GVAWFLGTSVLLSLASLIPFF), and 176–196 (IAMLGLVALAFTEFVKGTSLV).

This sequence belongs to the ELIP/psbS family.

It localises to the plastid. The protein localises to the chloroplast membrane. Probably involved in the integration of pigments into the mature pigment-protein complexes. This chain is Early light-induced protein, chloroplastic, found in Pisum sativum (Garden pea).